We begin with the raw amino-acid sequence, 258 residues long: Imidazole glycerol phosphate synthase subunit HisF (258 aa).

Catalysis depends on residues Asp-11 and Asp-130.

The protein belongs to the HisA/HisF family. As to quaternary structure, heterodimer of HisH and HisF.

It localises to the cytoplasm. The enzyme catalyses 5-[(5-phospho-1-deoxy-D-ribulos-1-ylimino)methylamino]-1-(5-phospho-beta-D-ribosyl)imidazole-4-carboxamide + L-glutamine = D-erythro-1-(imidazol-4-yl)glycerol 3-phosphate + 5-amino-1-(5-phospho-beta-D-ribosyl)imidazole-4-carboxamide + L-glutamate + H(+). The protein operates within amino-acid biosynthesis; L-histidine biosynthesis; L-histidine from 5-phospho-alpha-D-ribose 1-diphosphate: step 5/9. In terms of biological role, IGPS catalyzes the conversion of PRFAR and glutamine to IGP, AICAR and glutamate. The HisF subunit catalyzes the cyclization activity that produces IGP and AICAR from PRFAR using the ammonia provided by the HisH subunit. The chain is Imidazole glycerol phosphate synthase subunit HisF from Buchnera aphidicola subsp. Baizongia pistaciae (strain Bp).